Here is a 227-residue protein sequence, read N- to C-terminus: Ribonuclease 3 (227 aa).

The RNase III domain maps to 6-128 (ASDYQQRIGY…VIAAIYLDAD (123 aa)). Glutamate 41 lines the Mg(2+) pocket. Residue aspartate 45 is part of the active site. Residues aspartate 114 and glutamate 117 each contribute to the Mg(2+) site. Glutamate 117 is an active-site residue. The DRBM domain maps to 155–225 (DPKTRLQEWL…ASHAIDQLDS (71 aa)). The span at 203 to 212 (GEGSSRRLAE) shows a compositional bias: basic and acidic residues. Residues 203 to 227 (GEGSSRRLAEQDAASHAIDQLDSNK) are disordered.

This sequence belongs to the ribonuclease III family. As to quaternary structure, homodimer. The cofactor is Mg(2+).

The protein localises to the cytoplasm. The enzyme catalyses Endonucleolytic cleavage to 5'-phosphomonoester.. In terms of biological role, digests double-stranded RNA. Involved in the processing of primary rRNA transcript to yield the immediate precursors to the large and small rRNAs (23S and 16S). Processes some mRNAs, and tRNAs when they are encoded in the rRNA operon. Processes pre-crRNA and tracrRNA of type II CRISPR loci if present in the organism. The protein is Ribonuclease 3 of Xylella fastidiosa (strain M23).